The primary structure comprises 955 residues: MTRKNTTTNPWAKFHGPNLGYVIEQYDLYVTGAGSVDPELQELFEIFGAPSFQDDVVTGDNTATHFSPQNTGNIEKILKVVQLVEQIRSFGHTLAHINPMEDAANGQSLIEKTMNELSDADLKAIPAKTVWQDAPEGIHTALDVIHRLKDVYTKSLAYEFSHIQDSEERAWLHQMVESNSLRQPLSNKKRTALLKRLTAVEGFEQFLHKTFVGQKRFSIEGVDMLVPVLDEIVSEGAKGGVEDVMIGMAHRGRLSVLAHVLEKPYSHMFAEFKHAKIEGAVANAGWTGDVKYHLGREQVVGNEEVSTRVTLANNPSHLEFVNPVVEGFARAAQENRKKSGLPEQDTTKSFVILVHGDAAFPGQGVVSETLNLSRLNAYQTGGTIHVIANNAVGFTTDSYDSRSTKYSSDLAKGFDIPIVHVNADDPEACLAAANLAIQYRTLFKKDFLIDLIGYRRYGHNEMDDPAVTQPQVYKKIKNHPTVRAIYADQLQSAGVLNADEVETITQFMQEELKAEYAQVPPADTSAATIHVKVPEVVAKGIQPIDTGVSIESLRAINEGLLSWPEGFNVYPKVKKILERRKDALEENGKIEWALAESLAFASILQEGTPIRLTGQDSQRGTFAHRHIVLHDTDTNETYSPLHRLPNINASFSVHNSPLSEAAVVGYEYGYNVFAPETLVMWEAQYGDFSNTAQALFDQYVSAGRAKWGQKSGLVLLLPHGYEGQGPEHSSARPERFLQLAAENNWTVANLTSAAQYFHILRRQASILGTEAVRPLVLMTPKSLLRHPLTLSTASQLSEGRFQPALEQENLGAKPNKVKRLVLSTGKMAIDLAAEIESGKHEYSLDEVHMVRVEQLYPFPAEKVQSIIKRFKNLEEIIWVQEEPRNMGAWHYMAPILFELAGDKVKTGYIGRPDRSSPSGGDPFAHKAEQELIVAHALDVKYNFRQDKQEIEVFSN.

Belongs to the alpha-ketoglutarate dehydrogenase family. In terms of assembly, homodimer. Part of the 2-oxoglutarate dehydrogenase (OGDH) complex composed of E1 (2-oxoglutarate dehydrogenase), E2 (dihydrolipoamide succinyltransferase) and E3 (dihydrolipoamide dehydrogenase); the complex contains multiple copies of the three enzymatic components (E1, E2 and E3). Thiamine diphosphate serves as cofactor.

It carries out the reaction N(6)-[(R)-lipoyl]-L-lysyl-[protein] + 2-oxoglutarate + H(+) = N(6)-[(R)-S(8)-succinyldihydrolipoyl]-L-lysyl-[protein] + CO2. In terms of biological role, E1 component of the 2-oxoglutarate dehydrogenase (OGDH) complex which catalyzes the decarboxylation of 2-oxoglutarate, the first step in the conversion of 2-oxoglutarate to succinyl-CoA and CO(2). The protein is 2-oxoglutarate dehydrogenase E1 component of Bacillus mycoides (strain KBAB4) (Bacillus weihenstephanensis).